The chain runs to 120 residues: Seripauperin-20 (120 aa).

Residues Ile-7 to Ala-25 traverse the membrane as a helical segment.

This sequence belongs to the SRP1/TIP1 family. Seripauperin subfamily.

It is found in the membrane. This Saccharomyces cerevisiae (strain ATCC 204508 / S288c) (Baker's yeast) protein is Seripauperin-20 (PAU20).